Consider the following 312-residue polypeptide: Cytochrome c biogenesis protein CcsA (312 aa).

The next 8 membrane-spanning stretches (helical) occupy residues Asn-12–Phe-32, Ile-47–Phe-67, Leu-72–Phe-92, Leu-98–Leu-118, Met-144–Ile-164, Ile-220–Asn-240, Thr-254–Ile-271, and Ala-281–Leu-301.

This sequence belongs to the CcmF/CycK/Ccl1/NrfE/CcsA family. May interact with Ccs1.

It localises to the plastid. The protein resides in the chloroplast thylakoid membrane. Functionally, required during biogenesis of c-type cytochromes (cytochrome c6 and cytochrome f) at the step of heme attachment. In Trieres chinensis (Marine centric diatom), this protein is Cytochrome c biogenesis protein CcsA.